The primary structure comprises 526 residues: Tyrosine-protein kinase transforming protein Src (526 aa).

The tract at residues 1–52 (MGSSKSKPKDPSQRRHSLEPPDSTHHGGFPASQTPDETAAPDAHRNPSRSFG) is disordered. Gly-2 carries N-myristoyl glycine; by host lipidation. Positions 7 to 25 (KPKDPSQRRHSLEPPDSTH) are enriched in basic and acidic residues. SH3 domains lie at 71 to 139 (TSPQ…YVAP) and 81 to 142 (GGVT…PSDS). In terms of domain architecture, SH2 spans 148–245 (WYFGKITRRE…GLCHRLANVC (98 aa)). The Protein kinase domain occupies 267-517 (LRLEAKLGQG…TFKYLQAQLL (251 aa)). ATP contacts are provided by residues 273–281 (LGQGCFGEV) and Lys-295. The Proton acceptor role is filled by Asp-386. Tyr-416 bears the Phosphotyrosine; by autocatalysis mark.

This sequence belongs to the protein kinase superfamily. Tyr protein kinase family. SRC subfamily. In terms of assembly, homodimer. The phosphorylated form is termed pp60v-src.

It carries out the reaction L-tyrosyl-[protein] + ATP = O-phospho-L-tyrosyl-[protein] + ADP + H(+). In terms of biological role, this phosphoprotein, required for both the initiation and the maintenance of neoplastic transformation, is a protein kinase that catalyzes the phosphorylation of tyrosine residues in vitro. This chain is Tyrosine-protein kinase transforming protein Src (V-SRC), found in Gallus gallus (Chicken).